The following is a 63-amino-acid chain: MPFAQIYMIEGRTEAQKKAVIEKVSQALVEATGAPMANVRVWIQEVPKENWGIAGVSAKELGR.

The active-site Proton acceptor; via imino nitrogen is the proline 2.

This sequence belongs to the 4-oxalocrotonate tautomerase family. Homohexamer.

The catalysed reaction is (2Z,4E)-2-hydroxyhexa-2,4-dienedioate = (3E)-2-oxohex-3-enedioate. It functions in the pathway aromatic compound metabolism; salicylate degradation. In terms of biological role, catalyzes the ketonization of 2-hydroxymuconate stereoselectively to yield 2-oxo-3-hexenedioate. In Pseudomonas putida (Arthrobacter siderocapsulatus), this protein is 2-hydroxymuconate tautomerase (tdnL).